The primary structure comprises 122 residues: Large ribosomal subunit protein uL14 (122 aa).

Belongs to the universal ribosomal protein uL14 family. Part of the 50S ribosomal subunit. Forms a cluster with proteins L3 and L19. In the 70S ribosome, L14 and L19 interact and together make contacts with the 16S rRNA in bridges B5 and B8.

In terms of biological role, binds to 23S rRNA. Forms part of two intersubunit bridges in the 70S ribosome. The protein is Large ribosomal subunit protein uL14 of Lacticaseibacillus casei (strain BL23) (Lactobacillus casei).